Consider the following 593-residue polypeptide: Vitamin H transporter (593 aa).

Residues 1-121 (MTISNKSWRS…TTQTKAERRL (121 aa)) lie on the Extracellular side of the membrane. A phosphoserine mark is found at S32, S33, and S43. The helical transmembrane segment at 122-142 (LYKLDIIIALYFFMLCWSKSV) threads the bilayer. The Cytoplasmic portion of the chain corresponds to 143-166 (DLNNYTNAYVSNMKEDLNMKGNDY). The chain crosses the membrane as a helical span at residues 167–187 (VYTSTIANVGAIVFQLPFMYL). Residues 188–190 (LPR) are Extracellular-facing. Residues 191–211 (FPSHIILPVMDLGWTWFTFAC) traverse the membrane as a helical segment. The Cytoplasmic segment spans residues 212–224 (YRANSLAELRAYR). Residues 225-245 (FILSAFGAAYYPVSQYILGCW) traverse the membrane as a helical segment. Residues 246–291 (YAPDEINSRVCLFFCGQQLGSVTSGLLQSRIFKSLNGVHGLAGWRW) lie on the Extracellular side of the membrane. A helical membrane pass occupies residues 292–312 (MFLIDAIAISLPTAIIGFFVI). The Cytoplasmic segment spans residues 313 to 361 (PGVPSKCYSLFLTDEEIRIARARNKRNQIKDGVDKSKLAPLWSRKLWKK). A helical membrane pass occupies residues 362–382 (VFCTPAFWVLVVFDTCSWNNM). At 383 to 408 (TAYSGSYTLWLKSNTKYSIAQVNNLS) the chain is on the extracellular side. The helical transmembrane segment at 409 to 429 (VIPACLGFAYVIFCAFGADLF) threads the bilayer. The Cytoplasmic segment spans residues 430-432 (RCK). The chain crosses the membrane as a helical span at residues 433–453 (WIFMVFAAIMNTVSCALLIKW). The Extracellular segment spans residues 454–460 (DIPSKAK). A helical transmembrane segment spans residues 461-481 (WYAFFTTYFSVAASPCLWSFI). At 482–492 (NDFLRFDPQVK) the chain is on the cytoplasmic side. Residues 493 to 513 (AITWIAIYSFSQSTYAWIPTL) form a helical membrane-spanning segment. Topologically, residues 514-526 (AWPTVESPRFKTG) are extracellular. Residues 527–547 (YTVSLIFGAIYGLWTFVVLFF) traverse the membrane as a helical segment. At 548-593 (YKRNEKKHALGNGIILYDSNKGEELPEFVKKNMEERDGYYYLKRSS) the chain is on the cytoplasmic side.

Belongs to the major facilitator superfamily. Allantoate permease family.

It is found in the cell membrane. Functionally, involved in uptake of biotin with the concomitant entry of protons. This chain is Vitamin H transporter (VHT1), found in Saccharomyces cerevisiae (strain ATCC 204508 / S288c) (Baker's yeast).